The chain runs to 119 residues: Dolichyl-diphosphooligosaccharide--protein glycosyltransferase subunit DAD1 (119 aa).

N-acetylserine is present on Ser-2. Residues 2–30 (SASVASVISRFLEEYLSSTPQRLKLLDAY) are Cytoplasmic-facing. Residues 31–51 (LLYILLTGALQFGYCLLVGTF) traverse the membrane as a helical segment. Residues 52-54 (PFN) lie on the Lumenal side of the membrane. A helical transmembrane segment spans residues 55–75 (SFLSGFISCVGSFILAGNGSL). The Cytoplasmic segment spans residues 76–81 (RNRSNN). A helical membrane pass occupies residues 82 to 98 (VFTLVRCFSSLVTLFYS). Residues 99–119 (RSPPREVPRGACIALFCERGN) lie on the Lumenal side of the membrane.

This sequence belongs to the DAD/OST2 family. Component of the oligosaccharyltransferase (OST) complex. OST exists in two different complex forms which contain common core subunits RPN1, RPN2, OST48, OST4, DAD1 and TMEM258, either STT3A or STT3B as catalytic subunits, and form-specific accessory subunits. STT3A complex assembly occurs through the formation of 3 subcomplexes. Subcomplex 1 contains RPN1 and TMEM258, subcomplex 2 contains the STT3A-specific subunits STT3A, DC2/OSTC, and KCP2 as well as the core subunit OST4, and subcomplex 3 contains RPN2, DAD1, and OST48. The STT3A complex can form stable complexes with the Sec61 complex or with both the Sec61 and TRAP complexes.

It localises to the endoplasmic reticulum membrane. Its pathway is protein modification; protein glycosylation. Subunit of the oligosaccharyl transferase (OST) complex that catalyzes the initial transfer of a defined glycan (Glc(3)Man(9)GlcNAc(2) in eukaryotes) from the lipid carrier dolichol-pyrophosphate to an asparagine residue within an Asn-X-Ser/Thr consensus motif in nascent polypeptide chains, the first step in protein N-glycosylation. N-glycosylation occurs cotranslationally and the complex associates with the Sec61 complex at the channel-forming translocon complex that mediates protein translocation across the endoplasmic reticulum (ER). All subunits are required for a maximal enzyme activity. This is Dolichyl-diphosphooligosaccharide--protein glycosyltransferase subunit DAD1 from Canis lupus familiaris (Dog).